The chain runs to 308 residues: Taste receptor type 2 member 41 (308 aa).

Residues 1-7 (MLPTLSV) are Extracellular-facing. The helical transmembrane segment at 8–28 (FFMLTFVLLCFLGILANGFIV) threads the bilayer. Residues 29–60 (LMLSREWLLRGRLLPSDMILFSLGTSRFFQQC) lie on the Cytoplasmic side of the membrane. A helical membrane pass occupies residues 61 to 81 (VGLVNSFYYFLHLVEYSGSLA). Over 82–88 (RQLISLH) the chain is Extracellular. The chain crosses the membrane as a helical span at residues 89-109 (WDFLNSATFWFCTWLSVLFCI). The Cytoplasmic segment spans residues 110 to 128 (KIANFSHPAFLWLKWRFPA). Residues 129 to 149 (LVPWFLLGSILVSVIVTLLFF) form a helical membrane-spanning segment. Residues 150–186 (WGNHTIYQAFLRRKFTGNTTFKEWNRRLEIDYFMPLK) lie on the Extracellular side of the membrane. Asn-152 and Asn-167 each carry an N-linked (GlcNAc...) asparagine glycan. Residues 187–207 (VVTMSIPCSLFLVSILLLISS) traverse the membrane as a helical segment. Topologically, residues 208–239 (LRRHSLRMQHNTHSLQDPNVQAHSRALKSLIS) are cytoplasmic. The helical transmembrane segment at 240-260 (FLVLYAVSFVSMIIDATVFIS) threads the bilayer. Over 261–264 (SDNV) the chain is Extracellular. Residues 265 to 285 (WYWPWQIILYFCMSVHPFILI) form a helical membrane-spanning segment. At 286 to 308 (TNNLRFRGTFRQLLLLARGFWVA) the chain is on the cytoplasmic side.

Belongs to the G-protein coupled receptor T2R family. Expressed in subsets of taste receptor cells of the tongue and palate epithelium and exclusively in gustducin-positive cells.

It is found in the membrane. Its function is as follows. Receptor that may play a role in the perception of bitterness and is gustducin-linked. May play a role in sensing the chemical composition of the gastrointestinal content. The activity of this receptor may stimulate alpha gustducin, mediate PLC-beta-2 activation and lead to the gating of TRPM5. The sequence is that of Taste receptor type 2 member 41 (Tas2r41) from Mus musculus (Mouse).